The sequence spans 448 residues: Probable 3-ketoacyl-CoA thiolase (448 aa).

Cys110 (acyl-thioester intermediate) is an active-site residue. Residues His402 and Cys432 each act as proton acceptor in the active site.

This sequence belongs to the thiolase-like superfamily. Thiolase family.

The protein localises to the mitochondrion. It carries out the reaction an acyl-CoA + acetyl-CoA = a 3-oxoacyl-CoA + CoA. Its pathway is lipid metabolism; fatty acid beta-oxidation. Functionally, mitochondrial enzyme that catalyzes reactions of the mitochondrial beta-oxidation pathway. This is Probable 3-ketoacyl-CoA thiolase from Caenorhabditis elegans.